The following is a 489-amino-acid chain: Virion host shutoff protein (489 aa).

4 disordered regions span residues Glu-110–Asn-135, Ser-142–Ala-161, Arg-285–Glu-316, and Tyr-333–Pro-363. The segment covering Ile-124–Ser-134 has biased composition (polar residues).

The protein belongs to the herpesviridae VHS protein family. In terms of assembly, interacts with human EIF4H, EIF4A1 and EIF4A2; interaction with eIF4AI and EIF4A2 presumably allows Vhs protein to associate with the eIF4F cap-binding complex.

The protein resides in the virion. In terms of biological role, minor structural protein that acts as an endoribonuclease during lytic infection. Degrades host mRNAs in the cytoplasm by cutting them at preferred sites, including some in regions of translation initiation. Together with inhibition of host splicing by ICP27, contributes to an overall decrease in host protein synthesis. Also, after the onset of viral transcription, accelerates the turnover of viral mRNA, thereby facilitating the sequential expression of different classes of viral genes. Binds translation initiation factors eIF4H, eIF4AI, and eIF4AII, thereby may interact directly with the translation initiation complex and thus digest specifically mRNAs. Also impedes antigen presentation by major histocompatibility complex class I and class II molecules, inhibits secretion of cytokines that would otherwise recruit lymphocytes and neutrophils cells to the site of infection and blocks the activation of dendritic cells. Impedes the alpha/beta interferon-mediated response to infection by evading the cGAS/ STING-mediated DNA-sensing pathway and degrading CGAS via its RNase activity. This Human herpesvirus 1 (strain KOS) (HHV-1) protein is Virion host shutoff protein (UL41).